Here is a 178-residue protein sequence, read N- to C-terminus: Inner membrane-spanning protein YciB (178 aa).

The next 5 helical transmembrane spans lie at 22–42 (IFWATAALIVATALAVIYSWY), 50–70 (MTLVTFVLVAVFGGLTIYFHN), 76–96 (WKVTIIYALFAGALLIGQWVM), 121–141 (IAWALFFIFCGLLNIYVAFWL), and 149–169 (FKVFGIPGLTLVFTLLSGVYI).

It belongs to the YciB family.

It localises to the cell inner membrane. Plays a role in cell envelope biogenesis, maintenance of cell envelope integrity and membrane homeostasis. This chain is Inner membrane-spanning protein YciB, found in Cronobacter sakazakii (strain ATCC BAA-894) (Enterobacter sakazakii).